The sequence spans 393 residues: Protein TsgA (393 aa).

The next 12 membrane-spanning stretches (helical) occupy residues 11 to 31 (WISF…GMVM), 51 to 71 (FLNA…EIVP), 78 to 98 (FGFL…SLAL), 101 to 121 (AAMF…TFLV), 134 to 154 (LLFT…IAAF), 162 to 182 (WYWV…LTFG), 206 to 226 (IGVL…LGFI), 245 to 265 (TLVS…SFIL), 273 to 293 (ILTV…TGTP), 297 to 317 (AWSI…IITL), 332 to 352 (FVLT…GPIV), and 361 to 381 (LLTA…LGFV).

The protein belongs to the major facilitator superfamily. TsgA family.

It localises to the cell inner membrane. The chain is Protein TsgA from Escherichia coli O139:H28 (strain E24377A / ETEC).